An 81-amino-acid chain; its full sequence is Bursicon (81 aa).

In terms of assembly, heterodimer of burs and pburs. In terms of tissue distribution, central nervous system. Coexpressed with CCAP in most CCAP-specific neurons. Coexpressed with pburs in the large bilateral lateral neurosecretory neurons of the first three unfused abdominal ganglia and in all anterior bilateral cell pairs in the thoracic ganglia.

It localises to the secreted. Final heterodimeric neurohormone released at the end of the molting cycle, involved in the sclerotization (tanning) of the insect cuticle, melanization and wing spreading. In Periplaneta americana (American cockroach), this protein is Bursicon (burs).